Reading from the N-terminus, the 440-residue chain is 3-phosphoshikimate 1-carboxyvinyltransferase (440 aa).

3-phosphoshikimate-binding residues include Lys25, Ser26, and Arg30. Lys25 is a phosphoenolpyruvate binding site. Residues Gly96 and Arg124 each coordinate phosphoenolpyruvate. Residues Ser168, Gln169, Asp310, and Lys337 each contribute to the 3-phosphoshikimate site. Gln169 contacts phosphoenolpyruvate. Asp310 serves as the catalytic Proton acceptor. Arg341, Arg382, and Lys409 together coordinate phosphoenolpyruvate.

Belongs to the EPSP synthase family. In terms of assembly, monomer.

Its subcellular location is the cytoplasm. The enzyme catalyses 3-phosphoshikimate + phosphoenolpyruvate = 5-O-(1-carboxyvinyl)-3-phosphoshikimate + phosphate. It participates in metabolic intermediate biosynthesis; chorismate biosynthesis; chorismate from D-erythrose 4-phosphate and phosphoenolpyruvate: step 6/7. Catalyzes the transfer of the enolpyruvyl moiety of phosphoenolpyruvate (PEP) to the 5-hydroxyl of shikimate-3-phosphate (S3P) to produce enolpyruvyl shikimate-3-phosphate and inorganic phosphate. In Chlamydia trachomatis serovar A (strain ATCC VR-571B / DSM 19440 / HAR-13), this protein is 3-phosphoshikimate 1-carboxyvinyltransferase.